An 870-amino-acid chain; its full sequence is Eukaryotic translation initiation factor 3 subunit C (870 aa).

Positions 1 to 92 are disordered; that stretch reads MSRFFRGDSS…GVKVVKSAKN (92 aa). Residues 14 to 54 show a composition bias toward acidic residues; it reads SSDEEEDLYSDDEEVQEQPEEESEEDDSEEDDDDDDSDSSS. The 175-residue stretch at 608–782 folds into the PCI domain; it reads FHMHINLELL…SSIIFRKGVE (175 aa). The segment at 807–870 is disordered; it reads TLETRTQGTA…ALGAAVGSRA (64 aa). Residues 824–844 are compositionally biased toward gly residues; that stretch reads GRGGRGGNRGGRGGNRGGRGG.

The protein belongs to the eIF-3 subunit C family. As to quaternary structure, component of the eukaryotic translation initiation factor 3 (eIF-3) complex.

It localises to the cytoplasm. Its function is as follows. Component of the eukaryotic translation initiation factor 3 (eIF-3) complex, which is involved in protein synthesis of a specialized repertoire of mRNAs and, together with other initiation factors, stimulates binding of mRNA and methionyl-tRNAi to the 40S ribosome. The eIF-3 complex specifically targets and initiates translation of a subset of mRNAs involved in cell proliferation. This Sclerotinia sclerotiorum (strain ATCC 18683 / 1980 / Ss-1) (White mold) protein is Eukaryotic translation initiation factor 3 subunit C (nip1).